Reading from the N-terminus, the 446-residue chain is Na(+)-translocating NADH-quinone reductase subunit A (446 aa).

It belongs to the NqrA family. In terms of assembly, composed of six subunits; NqrA, NqrB, NqrC, NqrD, NqrE and NqrF.

The catalysed reaction is a ubiquinone + n Na(+)(in) + NADH + H(+) = a ubiquinol + n Na(+)(out) + NAD(+). This reaction is tightly coupled to the Na(+) pumping activity and specifically requires Na(+) for activity. Inhibited by korormicin and 2-N-heptyl-4-hydroxyquinoline N-oxide (HQNO). Its function is as follows. NQR complex catalyzes the reduction of ubiquinone-1 to ubiquinol by two successive reactions, coupled with the transport of Na(+) ions from the cytoplasm to the periplasm. NqrA to NqrE are probably involved in the second step, the conversion of ubisemiquinone to ubiquinol. The sequence is that of Na(+)-translocating NADH-quinone reductase subunit A from Vibrio alginolyticus.